The primary structure comprises 541 residues: Nectin 1b (541 aa).

The N-terminal stretch at 1–21 (MDKQESFFVGHKSHRCSQNRS) is a signal peptide. The Extracellular segment spans residues 22–396 (VSQIHQRTSR…PAELHSSGAA (375 aa)). N-linked (GlcNAc...) asparagine glycosylation is found at asparagine 51, asparagine 105, asparagine 180, asparagine 242, asparagine 326, asparagine 337, and asparagine 372. One can recognise an Ig-like V-type domain in the interval 77–182 (GDTVELKCLF…GNRENMVNLT (106 aa)). Cysteine 84 and cysteine 165 are disulfide-bonded. Ig-like C2-type domains follow at residues 187–282 (PVTK…VILN) and 287–374 (PEVK…VNVT). Intrachain disulfides connect cysteine 212/cysteine 266 and cysteine 309/cysteine 356. Residues 397 to 417 (IGGAVGGVALLVAAIALLVFF) form a helical membrane-spanning segment. Topologically, residues 418–541 (LRRRQRTFKG…SVISKKEWYV (124 aa)) are cytoplasmic. The segment at 440-507 (YSKAGGMPAH…VDEGESRDYD (68 aa)) is disordered. Over residues 479 to 493 (SGDRDFDGNSEDLKR) the composition is skewed to basic and acidic residues.

This sequence belongs to the nectin family. In terms of assembly, cis- and trans-homodimer. Can form trans-heterodimers. Expressed in the developing eye and nervous system.

The protein localises to the cell membrane. It localises to the cell junction. The protein resides in the adherens junction. Its function is as follows. Cell adhesion molecule that promotes cell-cell contacts and plays important roles in the development of the nervous system. Acts by forming homophilic or heterophilic trans-dimers. In Danio rerio (Zebrafish), this protein is Nectin 1b.